The chain runs to 171 residues: 3-hydroxydecanoyl-[acyl-carrier-protein] dehydratase (171 aa).

Residue His-71 is part of the active site.

This sequence belongs to the thioester dehydratase family. FabA subfamily. As to quaternary structure, homodimer.

It localises to the cytoplasm. The catalysed reaction is a (3R)-hydroxyacyl-[ACP] = a (2E)-enoyl-[ACP] + H2O. The enzyme catalyses (3R)-hydroxydecanoyl-[ACP] = (2E)-decenoyl-[ACP] + H2O. It catalyses the reaction (2E)-decenoyl-[ACP] = (3Z)-decenoyl-[ACP]. It participates in lipid metabolism; fatty acid biosynthesis. Necessary for the introduction of cis unsaturation into fatty acids. Catalyzes the dehydration of (3R)-3-hydroxydecanoyl-ACP to E-(2)-decenoyl-ACP and then its isomerization to Z-(3)-decenoyl-ACP. Can catalyze the dehydratase reaction for beta-hydroxyacyl-ACPs with saturated chain lengths up to 16:0, being most active on intermediate chain length. In Sinorhizobium fredii (strain NBRC 101917 / NGR234), this protein is 3-hydroxydecanoyl-[acyl-carrier-protein] dehydratase.